Consider the following 363-residue polypeptide: Galanin receptor 2a (363 aa).

The Extracellular portion of the chain corresponds to 1-23 (MNASQQIHVFSSHWKVESVIISL). The chain crosses the membrane as a helical span at residues 24–44 (IFSMIFLVGTVGNCLVLAVLI). The Cytoplasmic segment spans residues 45 to 54 (RNGQMNTKST). The helical transmembrane segment at 55-75 (NLFILNLGLADLCFIVFCVPL) threads the bilayer. Over 76 to 94 (QATIYTMDEWVFGAFVCKA) the chain is Extracellular. Residues C92 and C169 are joined by a disulfide bond. A helical membrane pass occupies residues 95–115 (VHFIIYLTMYASIFTLAAVSL). The Cytoplasmic segment spans residues 116–135 (DRYLAIRYPLRSRETRTPRN). Residues 136–156 (ALTSISLVWALSLFFSSPYLS) traverse the membrane as a helical segment. The Extracellular segment spans residues 157–179 (YYQQMDLDGTTVCIPAWSVHHRQ). The chain crosses the membrane as a helical span at residues 180-200 (AMDICTFIFGYLIPVLILGIT). Over 201 to 230 (YARTIRYLWTSVDPMQDMSESRKAKRKVTK) the chain is Cytoplasmic. A helical membrane pass occupies residues 231–251 (MIIIVAVLFCLCWLPHHLVIL). The Extracellular segment spans residues 252 to 268 (CMWFGHFPLNHTTYVLR). The chain crosses the membrane as a helical span at residues 269–289 (ILSHLVAYANSCLNPIVYALV). The Cytoplasmic segment spans residues 290-363 (SKHFRKGFKK…TSAFMTFNVT (74 aa)).

Belongs to the G-protein coupled receptor 1 family. In terms of tissue distribution, expressed in neurons in the ventral area of the interpeduncular nucleus (IPN) where expression often overlaps with spx1.

The protein resides in the membrane. In terms of biological role, receptor for the hormone galanin. Receptor for the hormones spexin-1 and spexin-2. In Danio rerio (Zebrafish), this protein is Galanin receptor 2a.